The chain runs to 168 residues: Putative apoptosis regulator A9 (168 aa).

The chain crosses the membrane as a helical span at residues 143–162 (SAFYFLTAAASCLTLLLLYF).

It localises to the host membrane. Functionally, suppresses apoptosis in host cell and thus facilitates production of progeny virions. The polypeptide is Putative apoptosis regulator A9 (A9) (Alcelaphine herpesvirus 1 (strain C500) (AlHV-1)).